The sequence spans 692 residues: Vitamin B12-dependent ribonucleoside-diphosphate reductase (692 aa).

Residues 7–95 (AKVRRRDGTL…IYRQRRAELR (89 aa)) enclose the ATP-cone domain. Residues Ser-177, 192–193 (GC), Gly-221, 375–379 (NPCGE), and 520–524 (PTGTI) each bind substrate. A disulfide bond links Cys-193 and Cys-388. Asn-375 serves as the catalytic Proton acceptor. Cys-377 serves as the catalytic Cysteine radical intermediate. The active-site Proton acceptor is the Glu-379.

This sequence belongs to the ribonucleoside diphosphate reductase class-2 family. It depends on adenosylcob(III)alamin as a cofactor.

The enzyme catalyses a 2'-deoxyribonucleoside 5'-diphosphate + [thioredoxin]-disulfide + H2O = a ribonucleoside 5'-diphosphate + [thioredoxin]-dithiol. Provides the precursors necessary for DNA synthesis. Catalyzes the biosynthesis of deoxyribonucleotides from the corresponding ribonucleotides. The sequence is that of Vitamin B12-dependent ribonucleoside-diphosphate reductase (nrdZ) from Mycobacterium tuberculosis (strain CDC 1551 / Oshkosh).